The following is a 550-amino-acid chain: Arginine--tRNA ligase (550 aa).

A 'HIGH' region motif is present at residues 125-135; that stretch reads ANPTGPLHIGH.

It belongs to the class-I aminoacyl-tRNA synthetase family. In terms of assembly, monomer.

It localises to the cytoplasm. The enzyme catalyses tRNA(Arg) + L-arginine + ATP = L-arginyl-tRNA(Arg) + AMP + diphosphate. This Lawsonia intracellularis (strain PHE/MN1-00) protein is Arginine--tRNA ligase.